Here is a 549-residue protein sequence, read N- to C-terminus: Cytoplasmic trehalase (549 aa).

Residues arginine 168, 175 to 176 (WD), asparagine 212, 221 to 223 (RSQ), 292 to 294 (RDE), and glycine 324 each bind substrate. Residues aspartate 326 and glutamate 509 each act as proton donor/acceptor in the active site. Glutamate 525 is a substrate binding site.

Belongs to the glycosyl hydrolase 37 family. In terms of assembly, monomer.

The protein localises to the cytoplasm. It catalyses the reaction alpha,alpha-trehalose + H2O = alpha-D-glucose + beta-D-glucose. Its pathway is glycan degradation; trehalose degradation; D-glucose from alpha,alpha-trehalose: step 1/1. In terms of biological role, hydrolyzes trehalose to glucose. Could be involved, in cells returning to low osmolarity conditions, in the utilization of the accumulated cytoplasmic trehalose, which was synthesized in response to high osmolarity. In Salmonella typhi, this protein is Cytoplasmic trehalase.